We begin with the raw amino-acid sequence, 804 residues long: ATP-dependent RNA helicase dbp4 (804 aa).

The disordered stretch occupies residues 1–24; the sequence is MAPANAPRNGKYAKSSQRTLKRKR. The Q motif motif lies at 46–74; sequence KAFTDLPLSEPTLSGLSASHYKTLTDIQS. Positions 77–251 constitute a Helicase ATP-binding domain; the sequence is VSHALKGRDI…RLSLQDPEYV (175 aa). Position 90–97 (90–97) interacts with ATP; that stretch reads AKTGSGKT. The short motif at 199-202 is the DEAD box element; that stretch reads DEAD. The region spanning 277–436 is the Helicase C-terminal domain; it reads KLDILWSFIR…SIKNQLQNMC (160 aa). Disordered regions lie at residues 493–541, 589–615, and 695–804; these read GDDT…DRMF, DKQLEVGGSSDESGSDSEAETGKKDVK, and LADV…GLLG. Basic and acidic residues predominate over residues 521–541; the sequence is DEKKSKKKDAPQVRTKYDRMF. Basic and acidic residues predominate over residues 695 to 705; it reads LADVEDKELVK. The segment covering 706-715 has biased composition (basic residues); it reads QKRREKKEKR.

Belongs to the DEAD box helicase family. DDX10/DBP4 subfamily. Interacts with the U3 and U14 snoRNAs. Associates with pre-ribosomal complexes.

The protein localises to the nucleus. It is found in the nucleolus. The enzyme catalyses ATP + H2O = ADP + phosphate + H(+). ATP-dependent RNA helicase required for ribosome biogenesis. Involved in the release of U14 snoRNA in pre-ribosomal complexes. Required for pre-rRNA cleavage at site A2. This is ATP-dependent RNA helicase dbp4 (dbp4) from Aspergillus terreus (strain NIH 2624 / FGSC A1156).